We begin with the raw amino-acid sequence, 254 residues long: 5'-nucleotidase SurE (254 aa).

Positions 8, 9, 40, and 93 each coordinate a divalent metal cation.

It belongs to the SurE nucleotidase family. It depends on a divalent metal cation as a cofactor.

Its subcellular location is the cytoplasm. It catalyses the reaction a ribonucleoside 5'-phosphate + H2O = a ribonucleoside + phosphate. Functionally, nucleotidase that shows phosphatase activity on nucleoside 5'-monophosphates. The protein is 5'-nucleotidase SurE of Methylorubrum extorquens (strain CM4 / NCIMB 13688) (Methylobacterium extorquens).